The primary structure comprises 383 residues: Chaperone protein DnaJ (383 aa).

The region spanning 5–70 (DYYELLGVEK…QKRAAYDRFG (66 aa)) is the J domain. A CR-type zinc finger spans residues 137–215 (GKTATVKVPS…CGGSGRTRKE (79 aa)). The Zn(2+) site is built by Cys-150, Cys-153, Cys-167, Cys-170, Cys-189, Cys-192, Cys-203, and Cys-206. CXXCXGXG motif repeat units follow at residues 150 to 157 (CEDCKGTG), 167 to 174 (CSACHGHG), 189 to 196 (CPTCQGMG), and 203 to 210 (CRSCGGSG).

Belongs to the DnaJ family. As to quaternary structure, homodimer. The cofactor is Zn(2+).

Its subcellular location is the cytoplasm. Functionally, participates actively in the response to hyperosmotic and heat shock by preventing the aggregation of stress-denatured proteins and by disaggregating proteins, also in an autonomous, DnaK-independent fashion. Unfolded proteins bind initially to DnaJ; upon interaction with the DnaJ-bound protein, DnaK hydrolyzes its bound ATP, resulting in the formation of a stable complex. GrpE releases ADP from DnaK; ATP binding to DnaK triggers the release of the substrate protein, thus completing the reaction cycle. Several rounds of ATP-dependent interactions between DnaJ, DnaK and GrpE are required for fully efficient folding. Also involved, together with DnaK and GrpE, in the DNA replication of plasmids through activation of initiation proteins. The chain is Chaperone protein DnaJ from Paramagnetospirillum magneticum (strain ATCC 700264 / AMB-1) (Magnetospirillum magneticum).